A 329-amino-acid polypeptide reads, in one-letter code: tRNA N6-adenosine threonylcarbamoyltransferase (329 aa).

The Fe cation site is built by His110 and His114. Residues 132-136 (VISGG), Asp165, Gly178, and Asn271 each bind substrate. Asp299 is a Fe cation binding site.

Belongs to the KAE1 / TsaD family. The cofactor is Fe(2+).

Its subcellular location is the cytoplasm. It catalyses the reaction L-threonylcarbamoyladenylate + adenosine(37) in tRNA = N(6)-L-threonylcarbamoyladenosine(37) in tRNA + AMP + H(+). Required for the formation of a threonylcarbamoyl group on adenosine at position 37 (t(6)A37) in tRNAs that read codons beginning with adenine. Is involved in the transfer of the threonylcarbamoyl moiety of threonylcarbamoyl-AMP (TC-AMP) to the N6 group of A37, together with TsaE and TsaB. TsaD likely plays a direct catalytic role in this reaction. This chain is tRNA N6-adenosine threonylcarbamoyltransferase, found in Neorickettsia sennetsu (strain ATCC VR-367 / Miyayama) (Ehrlichia sennetsu).